The sequence spans 252 residues: Phosphoglycolate phosphatase (252 aa).

The Nucleophile role is filled by D13. Mg(2+) contacts are provided by D13, D15, and D192.

Belongs to the HAD-like hydrolase superfamily. CbbY/CbbZ/Gph/YieH family. As to quaternary structure, monomer. The cofactor is Mg(2+). It depends on chloride as a cofactor.

The enzyme catalyses 2-phosphoglycolate + H2O = glycolate + phosphate. The protein operates within organic acid metabolism; glycolate biosynthesis; glycolate from 2-phosphoglycolate: step 1/1. Its function is as follows. Specifically catalyzes the dephosphorylation of 2-phosphoglycolate. Is involved in the dissimilation of the intracellular 2-phosphoglycolate formed during the DNA repair of 3'-phosphoglycolate ends, a major class of DNA lesions induced by oxidative stress. The polypeptide is Phosphoglycolate phosphatase (Salmonella paratyphi A (strain ATCC 9150 / SARB42)).